Here is a 251-residue protein sequence, read N- to C-terminus: Proteasome subunit alpha type-4-like (251 aa).

This sequence belongs to the peptidase T1A family. In terms of assembly, the 26S proteasome consists of a 20S proteasome core and two 19S regulatory subunits. The 20S proteasome core is composed of 28 subunits that are arranged in four stacked rings, resulting in a barrel-shaped structure. The two end rings are each formed by seven alpha subunits, and the two central rings are each formed by seven beta subunits. The catalytic chamber with the active sites is on the inside of the barrel. As to expression, testis, prominent after meiosis II. After meiosis, predominantly localized to the haploid spermatid nuclei of the 64-cell cysts, remaining during the elongation and condensation of the spermatid nuclei. In mature, motile sperm, expression is seen exclusively in the sperm head.

Its subcellular location is the nucleus. Functionally, the proteasome is a multicatalytic proteinase complex which is characterized by its ability to cleave peptides with Arg, Phe, Tyr, Leu, and Glu adjacent to the leaving group at neutral or slightly basic pH. The proteasome has an ATP-dependent proteolytic activity. This chain is Proteasome subunit alpha type-4-like (Prosalpha3T), found in Drosophila melanogaster (Fruit fly).